The primary structure comprises 193 residues: Probable GTP-binding protein EngB (193 aa).

The region spanning 22–193 is the EngB-type G domain; it reads MYPEISFIGR…ELWQIIEDLL (172 aa). Residues 30-37, 57-61, 75-78, 142-145, and 174-176 contribute to the GTP site; these read GRSNVGKS, GKTRT, DLPG, TKMD, and FSS. Positions 37 and 59 each coordinate Mg(2+).

Belongs to the TRAFAC class TrmE-Era-EngA-EngB-Septin-like GTPase superfamily. EngB GTPase family. It depends on Mg(2+) as a cofactor.

Its function is as follows. Necessary for normal cell division and for the maintenance of normal septation. This chain is Probable GTP-binding protein EngB, found in Natranaerobius thermophilus (strain ATCC BAA-1301 / DSM 18059 / JW/NM-WN-LF).